Consider the following 143-residue polypeptide: Large ribosomal subunit protein uL15 (143 aa).

The disordered stretch occupies residues 1-48 (MRLNTISPSKGAKHSSKRLGRGIGSGLGKTSGRGHKGQKARSGCSIHR). The span at 11–20 (GAKHSSKRLG) shows a compositional bias: basic residues. Residues 21–31 (RGIGSGLGKTS) are compositionally biased toward gly residues.

The protein belongs to the universal ribosomal protein uL15 family. Part of the 50S ribosomal subunit.

Functionally, binds to the 23S rRNA. This Baumannia cicadellinicola subsp. Homalodisca coagulata protein is Large ribosomal subunit protein uL15.